A 295-amino-acid chain; its full sequence is MEGVILASSALFTVYIGAKWSAQEEEPEEKQLINKRLAVLFPIFGGVTLVLMYLALRYLSKEYIQLILQGYASLASIICFVRSFNPKTTFGKITATMSSIAIALFYFKTKHWMASNILAWALAANSISIMRIDSYNTGALLLGALFFYDIYFVFGTEVMVTVATGIDIPAKYVLPQFKNPTRLSMLGLGDIVMPGLMLALMYRFDLHYYINSTSQPKKHSTYFRNTFIAYGLGLGVTNFALYYFKAAQPALLYLSPACIVAPLLTAWYRDELKTLFSFRSETEDETDEQDKCKST.

A helical transmembrane segment spans residues 1–21 (MEGVILASSALFTVYIGAKWS). Over 22–35 (AQEEEPEEKQLINK) the chain is Cytoplasmic. The helical transmembrane segment at 36 to 56 (RLAVLFPIFGGVTLVLMYLAL) threads the bilayer. Residues 57–63 (RYLSKEY) are Lumenal-facing. A helical transmembrane segment spans residues 64–84 (IQLILQGYASLASIICFVRSF). Residues 85 to 89 (NPKTT) are Cytoplasmic-facing. Residues 90–106 (FGKITATMSSIAIALFY) traverse the membrane as a helical segment. The Lumenal segment spans residues 107 to 111 (FKTKH). A helical transmembrane segment spans residues 112–130 (WMASNILAWALAANSISIM). At 131–139 (RIDSYNTGA) the chain is on the cytoplasmic side. The helical transmembrane segment at 140 to 160 (LLLGALFFYDIYFVFGTEVMV) threads the bilayer. The active site involves D149. The Lumenal portion of the chain corresponds to 161-183 (TVATGIDIPAKYVLPQFKNPTRL). The helical transmembrane segment at 184 to 204 (SMLGLGDIVMPGLMLALMYRF) threads the bilayer. Residue D190 is part of the active site. The Cytoplasmic segment spans residues 205–221 (DLHYYINSTSQPKKHST). Residues 222–244 (YFRNTFIAYGLGLGVTNFALYYF) traverse the membrane as a helical segment. Over 245–249 (KAAQP) the chain is Lumenal. A PAL motif is present at residues 249-251 (PAL). A helical membrane pass occupies residues 250–268 (ALLYLSPACIVAPLLTAWY). Residues 269 to 295 (RDELKTLFSFRSETEDETDEQDKCKST) lie on the Cytoplasmic side of the membrane.

Belongs to the peptidase A22B family.

The protein localises to the endoplasmic reticulum membrane. It is found in the golgi apparatus membrane. This chain is Probable intramembrane protease C25B8.17, found in Schizosaccharomyces pombe (strain 972 / ATCC 24843) (Fission yeast).